Reading from the N-terminus, the 181-residue chain is Ribosome maturation factor RimP (181 aa).

Belongs to the RimP family.

It is found in the cytoplasm. In terms of biological role, required for maturation of 30S ribosomal subunits. The protein is Ribosome maturation factor RimP of Sphingopyxis alaskensis (strain DSM 13593 / LMG 18877 / RB2256) (Sphingomonas alaskensis).